A 282-amino-acid chain; its full sequence is HTH-type transcriptional activator RhaR (282 aa).

In terms of domain architecture, HTH araC/xylS-type spans 179–277 (DKLITALANS…GMTPSQWRHL (99 aa)). 2 consecutive DNA-binding regions (H-T-H motif) follow at residues 196 to 217 (DAFCQQEQCSERVLRQQFRAQT) and 244 to 267 (ISEISMQCGFEDSNYFSVVFTRET).

As to quaternary structure, binds DNA as a dimer.

The protein resides in the cytoplasm. Activates expression of the rhaSR operon in response to L-rhamnose. This Salmonella typhimurium (strain LT2 / SGSC1412 / ATCC 700720) protein is HTH-type transcriptional activator RhaR.